The chain runs to 1972 residues: Myosin-11 (1972 aa).

Ser-8, Ser-23, and Ser-40 each carry phosphoserine. The Myosin N-terminal SH3-like domain maps to 31-81 (VAKKLVWVPSEKQGFEAASIKEEKGDEVVVELVENGKKVTVGKDDIQKMNP). In terms of domain architecture, Myosin motor spans 85 to 783 (SKVEDMAELT…VLAHLEEERD (699 aa)). An N6,N6,N6-trimethyllysine modification is found at Lys-129. Position 178–185 (178–185 (GESGAGKT)) interacts with ATP. Actin-binding regions lie at residues 661-683 (LGKL…IPNH) and 762-776 (RIGQ…GVLA). One can recognise an IQ domain in the interval 786–815 (ITDVIMAFQAMCRGYLARKAFTKRQQQLTA). Residues 844-1934 (LLQVTRQEEE…KSKLRRGNEA (1091 aa)) adopt a coiled-coil conformation. Thr-1177 bears the Phosphothreonine mark. Phosphoserine occurs at positions 1684 and 1722. Positions 1771 to 1788 (NELATERSTAQKNESARQ) are enriched in polar residues. Disordered stretches follow at residues 1771–1797 (NELA…NKEL) and 1867–1972 (QYKE…KASE). Residues 1867–1876 (QYKEQAEKGN) show a composition bias toward basic and acidic residues. The tract at residues 1935–1972 (SFVPSRRAGGRRVIENTDGSEEEMDARDSDFNGTKASE) is C-terminal. Thr-1951 is subject to Phosphothreonine. Phosphoserine occurs at positions 1954 and 1971.

The protein belongs to the TRAFAC class myosin-kinesin ATPase superfamily. Myosin family. As to quaternary structure, muscle myosin is a hexameric protein that consists of 2 heavy chain subunits (MHC), 2 alkali light chain subunits (MLC) and 2 regulatory light chain subunits (MLC-2).

It localises to the melanosome. It is found in the cytoplasm. The protein localises to the myofibril. In terms of biological role, muscle contraction. The protein is Myosin-11 (Myh11) of Mus musculus (Mouse).